The primary structure comprises 200 residues: Endoribonuclease YbeY (200 aa).

Over residues 1–18 (MPADPALPDPVPPGPTAP) the composition is skewed to pro residues. Residues 1–22 (MPADPALPDPVPPGPTAPVPTD) form a disordered region. Histidine 151, histidine 155, and histidine 161 together coordinate Zn(2+).

The protein belongs to the endoribonuclease YbeY family. The cofactor is Zn(2+).

It localises to the cytoplasm. Single strand-specific metallo-endoribonuclease involved in late-stage 70S ribosome quality control and in maturation of the 3' terminus of the 16S rRNA. This is Endoribonuclease YbeY from Rhodospirillum rubrum (strain ATCC 11170 / ATH 1.1.1 / DSM 467 / LMG 4362 / NCIMB 8255 / S1).